The sequence spans 577 residues: Arginine--tRNA ligase (577 aa).

The 'HIGH' region motif lies at 122-132 (PNVAKEMHVGH).

This sequence belongs to the class-I aminoacyl-tRNA synthetase family. As to quaternary structure, monomer.

It localises to the cytoplasm. It carries out the reaction tRNA(Arg) + L-arginine + ATP = L-arginyl-tRNA(Arg) + AMP + diphosphate. The protein is Arginine--tRNA ligase of Salmonella paratyphi B (strain ATCC BAA-1250 / SPB7).